The chain runs to 106 residues: MIVTTTAHIEGREIASYLDIVSAESVHGINVVRDLFAGMRDFFGGRSQTLERALKEARIQATNEIKERARQCNADAVVGVDFEISMPAGRGGMVVVFATGTAVRLK.

The protein belongs to the UPF0145 family.

This is UPF0145 protein PFL_3418 from Pseudomonas fluorescens (strain ATCC BAA-477 / NRRL B-23932 / Pf-5).